A 159-amino-acid polypeptide reads, in one-letter code: MITKAIYPGTFDPITNGHLDLVTRASAMFSHVILAIADSSSKKPMFTLDERVALAKKVTAPLKNVEVLGFSELMAEFAKKHNANILVRGLRSVSDFEYEWQLANMNRHLMPKLESVFLMPSEKWSFISSSLVKEVARHGGDITPFLPKPVTKALLAKLA.

Residue threonine 10 participates in substrate binding. ATP is bound by residues 10–11 and histidine 18; that span reads TF. Positions 42, 74, and 88 each coordinate substrate. Residues 89-91, glutamate 99, and 124-130 each bind ATP; these read GLR and WSFISSS.

Belongs to the bacterial CoaD family. As to quaternary structure, homohexamer. Mg(2+) is required as a cofactor.

Its subcellular location is the cytoplasm. The catalysed reaction is (R)-4'-phosphopantetheine + ATP + H(+) = 3'-dephospho-CoA + diphosphate. It functions in the pathway cofactor biosynthesis; coenzyme A biosynthesis; CoA from (R)-pantothenate: step 4/5. Reversibly transfers an adenylyl group from ATP to 4'-phosphopantetheine, yielding dephospho-CoA (dPCoA) and pyrophosphate. The chain is Phosphopantetheine adenylyltransferase from Yersinia pseudotuberculosis serotype O:3 (strain YPIII).